A 184-amino-acid chain; its full sequence is Non-specific lipid transfer protein GPI-anchored 6 (184 aa).

A signal peptide spans 1 to 24 (MEKSTRTLFITIVITSMLLGFGNS). Cystine bridges form between Cys33-Cys74, Cys43-Cys58, Cys59-Cys101, and Cys72-Cys111. The segment at 138–158 (NSTSPTQIHKDGTGGGKAEPV) is disordered. A lipid anchor (GPI-anchor amidated serine) is attached at Ser160. The propeptide at 161-184 (NGWKEKSWLGVELLIYLLVSLIFF) is removed in mature form.

Belongs to the plant LTP family. As to expression, preferentially expressed in the shoot apical meristem and the root meristem. Also present in the ovules and developing embryos. Observed in cotyledons, hypocotyls, flowers, leaves and siliques. Up-regulated in the epidermis of stems.

Its subcellular location is the cell membrane. Lipid transfer protein involved in seed and ovule maturation and development, probably by regulating the fatty acids homeostasis during suberin and sporopollenin biosynthesis or deposition. Contributes to pre-invasive defense against some non-host powdery mildew pathogens by preventing the penetration of the epidermal cell wall by the fungal agents (e.g. Blumeria graminis f. sp. hordei (Bgh)). This is Non-specific lipid transfer protein GPI-anchored 6 from Arabidopsis thaliana (Mouse-ear cress).